Here is a 185-residue protein sequence, read N- to C-terminus: GTP cyclohydrolase 1 (185 aa).

3 residues coordinate Zn(2+): cysteine 75, histidine 78, and cysteine 146.

Belongs to the GTP cyclohydrolase I family. Toroid-shaped homodecamer, composed of two pentamers of five dimers.

The enzyme catalyses GTP + H2O = 7,8-dihydroneopterin 3'-triphosphate + formate + H(+). It functions in the pathway cofactor biosynthesis; 7,8-dihydroneopterin triphosphate biosynthesis; 7,8-dihydroneopterin triphosphate from GTP: step 1/1. The protein is GTP cyclohydrolase 1 of Alkalilimnicola ehrlichii (strain ATCC BAA-1101 / DSM 17681 / MLHE-1).